The following is a 162-amino-acid chain: Protein A49 (162 aa).

The protein belongs to the poxviridae A49 protein family.

This is Protein A49 from Homo sapiens (Human).